The following is a 390-amino-acid chain: Purine permease 21 (390 aa).

The interval 12 to 34 is disordered; that stretch reads QQGKEPIPTDQDERSSVSGSQTK. 10 helical membrane passes run 44–64, 78–98, 118–138, 140–160, 169–189, 204–224, 241–261, 287–307, 312–332, and 336–356; these read WLRVAIYTFFVISGQSVATIL, LATVVQLVGFPILLPYHLLSV, LVYIVLGLLVGAACYLYSIGL, YLPVSTLSLICASQLAFTAFF, LTPIILNSLFLLTISSTLLAF, YVKGFVCTVGASAGFGLLLSL, VINMIIYMSLVASCVSVVGLF, LVWTAVTWQVFSIGCTGLIFE, FSNAISALGLPVVPILAVIIF, and MNGLKVISMILAIWGFVSYVY. The segment at 367 to 390 is disordered; the sequence is KSNEIPTTESPDRPEAEGSSEQSK.

Belongs to the purine permeases (TC 2.A.7.14) family. Expressed in mesophyll cells.

Its subcellular location is the membrane. This chain is Purine permease 21, found in Arabidopsis thaliana (Mouse-ear cress).